Consider the following 425-residue polypeptide: GTPase Obg (425 aa).

Residues 1–158 enclose the Obg domain; sequence MFKDYAKIHV…LWLELELKLL (158 aa). Residues 159–329 form the OBG-type G domain; that stretch reads ADVGLVGFPN…LIYRTYRLLE (171 aa). Residues 165–172, 190–194, 212–215, 282–285, and 310–312 contribute to the GTP site; these read GFPNAGKS, FTTLE, DIPG, NKTD, and SAL. The Mg(2+) site is built by Ser-172 and Thr-192. Positions 341-421 constitute an OCT domain; sequence VPDERETDVT…IGRFEFEYSE (81 aa).

Belongs to the TRAFAC class OBG-HflX-like GTPase superfamily. OBG GTPase family. Monomer. Mg(2+) serves as cofactor.

It localises to the cytoplasm. An essential GTPase which binds GTP, GDP and possibly (p)ppGpp with moderate affinity, with high nucleotide exchange rates and a fairly low GTP hydrolysis rate. Plays a role in control of the cell cycle, stress response, ribosome biogenesis and in those bacteria that undergo differentiation, in morphogenesis control. This Desulforudis audaxviator (strain MP104C) protein is GTPase Obg.